Here is a 156-residue protein sequence, read N- to C-terminus: ATP synthase subunit b (156 aa).

The chain crosses the membrane as a helical span at residues 11 to 31 (AIAFAIFVMFCMKFVWPPLIG).

This sequence belongs to the ATPase B chain family. F-type ATPases have 2 components, F(1) - the catalytic core - and F(0) - the membrane proton channel. F(1) has five subunits: alpha(3), beta(3), gamma(1), delta(1), epsilon(1). F(0) has three main subunits: a(1), b(2) and c(10-14). The alpha and beta chains form an alternating ring which encloses part of the gamma chain. F(1) is attached to F(0) by a central stalk formed by the gamma and epsilon chains, while a peripheral stalk is formed by the delta and b chains.

It is found in the cell inner membrane. F(1)F(0) ATP synthase produces ATP from ADP in the presence of a proton or sodium gradient. F-type ATPases consist of two structural domains, F(1) containing the extramembraneous catalytic core and F(0) containing the membrane proton channel, linked together by a central stalk and a peripheral stalk. During catalysis, ATP synthesis in the catalytic domain of F(1) is coupled via a rotary mechanism of the central stalk subunits to proton translocation. Its function is as follows. Component of the F(0) channel, it forms part of the peripheral stalk, linking F(1) to F(0). The sequence is that of ATP synthase subunit b from Psychrobacter cryohalolentis (strain ATCC BAA-1226 / DSM 17306 / VKM B-2378 / K5).